The primary structure comprises 99 residues: Putative endopeptidase RzpR (99 aa).

This Escherichia coli (strain K12) protein is Putative endopeptidase RzpR (rzpR).